The sequence spans 636 residues: Polyadenylate-binding protein 1 (636 aa).

Methionine 1 is subject to N-acetylmethionine. RRM domains lie at 11-89 (ASLY…WSQR), 99-175 (GNIF…RFKS), 191-268 (TNVY…RAQK), and 294-370 (VNLY…LAQR). The interval 166 to 289 (RKVFVGRFKS…FEQMKQDRIT (124 aa)) is CSDE1-binding. Residue lysine 299 is modified to N6-methyllysine. The residue at position 315 (serine 315) is a Phosphoserine. At threonine 319 the chain carries Phosphothreonine. Residues arginine 385, arginine 419, arginine 432, and arginine 436 each carry the omega-N-methylarginine modification. Arginine 455 and arginine 460 each carry omega-N-methylated arginine; by CARM1. Omega-N-methylarginine occurs at positions 475 and 481. Residue arginine 493 is modified to Asymmetric dimethylarginine; alternate. Arginine 493 is modified (dimethylated arginine; alternate). Arginine 493 is modified (omega-N-methylarginine; alternate). An Omega-N-methylarginine modification is found at arginine 506. N6-acetyllysine is present on lysine 512. The residue at position 518 (arginine 518) is an Omega-N-methylarginine. The PABC domain occupies 542 to 619 (QEPLTASMLA…AVAVLQAHQA (78 aa)).

It belongs to the polyadenylate-binding protein type-1 family. May form homodimers. Component of a multisubunit autoregulatory ribonucleoprotein complex (ARC), at least composed of IGF2BP1, PABPC1 and CSDE1. Directly interacts with IGF2BP1. Part of a complex associated with the FOS mCRD domain and consisting of HNRPD, SYNCRIP, PAIP1 and CSDE1/UNR. Interacts with PAIP1 and PAIP2 (via the PABPC1-interacting motifs PAM1 and PAM2). Interacts with PAIP1 with a 1:1 stoichiometry and with PAIP2 with a 1:2 stoichiometry. The interaction with CSDE1 is direct and RNA-independent. Found in a mRNP complex with YBX2. Interacts with TENT2/GLD2. Identified in the spliceosome C complex. Identified in a mRNP complex, at least composed of DHX9, DDX3X, ELAVL1, HNRNPU, IGF2BP1, ILF3, PABPC1, PCBP2, PTBP2, STAU1, STAU2, SYNCRIP and YBX1. The interaction with DDX3X is direct and RNA-independent. This interaction increases in stressed cells and decreases during cell recovery. Identified in a IGF2BP1-dependent mRNP granule complex containing untranslated mRNAs. Interacts with NXF1/TAP. Interacts with PIWIL1. Interacts with AGO1, AGO2, GSPT1 and GSPT2. Interacts with LARP4B. Interacts (via the second and third RRM domains and the C-terminus) with PAIP2B (via central acidic portion and C-terminus). Forms a complex with LARP1 and SHFL. Interacts with LARP4. Interacts with ZFC3H1 in a RNase-sensitive manner. Interacts with TRIM71 (via NHL repeats) in an RNA-dependent manner. Interacts with TENT5C; the interaction has no effect on TENT5C poly(A) polymerase function. Interacts with G3BP1 and G3BP2. Interacts with ENDOV; the interaction is RNA-dependent and stimulates ENDOV activity. Interacts with UPF1; the interaction is RNA-dependent. Interacts with IGF2BP2 and IGF2BP3. May interact with SETX. Interacts with RBM46. Interacts with PAN3. In terms of processing, phosphorylated by MAPKAPK2. Post-translationally, methylated by CARM1. Arg-493 is dimethylated, probably to asymmetric dimethylarginine.

The protein resides in the cytoplasm. Its subcellular location is the stress granule. It localises to the nucleus. The protein localises to the cell projection. It is found in the lamellipodium. Binds the poly(A) tail of mRNA, including that of its own transcript, and regulates processes of mRNA metabolism such as pre-mRNA splicing and mRNA stability. Its function in translational initiation regulation can either be enhanced by PAIP1 or repressed by PAIP2. Can probably bind to cytoplasmic RNA sequences other than poly(A) in vivo. Binds to N6-methyladenosine (m6A)-containing mRNAs and contributes to MYC stability by binding to m6A-containing MYC mRNAs. Involved in translationally coupled mRNA turnover. Implicated with other RNA-binding proteins in the cytoplasmic deadenylation/translational and decay interplay of the FOS mRNA mediated by the major coding-region determinant of instability (mCRD) domain. Involved in regulation of nonsense-mediated decay (NMD) of mRNAs containing premature stop codons; for the recognition of premature termination codons (PTC) and initiation of NMD a competitive interaction between UPF1 and PABPC1 with the ribosome-bound release factors is proposed. By binding to long poly(A) tails, may protect them from uridylation by ZCCHC6/ZCCHC11 and hence contribute to mRNA stability. The protein is Polyadenylate-binding protein 1 (PABPC1) of Bos taurus (Bovine).